A 153-amino-acid polypeptide reads, in one-letter code: Small ribosomal subunit protein eS19 (153 aa).

2 disordered regions span residues 77 to 99 (YGTSKQGTTRYRVRPHQKTKGSG) and 113 to 139 (GYVETSENDGRRVTGDGRSLLDDTAGD). Residues 120–133 (NDGRRVTGDGRSLL) are compositionally biased toward basic and acidic residues.

This sequence belongs to the eukaryotic ribosomal protein eS19 family. As to quaternary structure, part of the 30S ribosomal subunit.

Functionally, may be involved in maturation of the 30S ribosomal subunit. This is Small ribosomal subunit protein eS19 from Haloarcula marismortui (strain ATCC 43049 / DSM 3752 / JCM 8966 / VKM B-1809) (Halobacterium marismortui).